We begin with the raw amino-acid sequence, 330 residues long: Stearoyl-CoA desaturase 5 (330 aa).

At 1–49 (MPGPATDAGKIPFCDAKEEIRAGLESSEGGGGPERPGARGQRQNIVWRN) the chain is on the cytoplasmic side. Asn-49 is a substrate binding site. The helical transmembrane segment at 50–70 (VVLMSLLHLGAVYSLVLIPKA) threads the bilayer. Over 71–72 (KP) the chain is Lumenal. A helical transmembrane segment spans residues 73-93 (LTLLWAYFCFLLAALGVTAGA). Fe cation is bound by residues His-94 and His-99. Positions 94-99 (HRLWSH) match the Histidine box-1 motif. The Cytoplasmic segment spans residues 94 to 193 (HRLWSHRSYR…VVRIQRKYYK (100 aa)). The substrate site is built by Asn-122, Arg-129, and Asp-130. Fe cation contacts are provided by His-131, His-134, and His-135. The short motif at 131–135 (HRAHH) is the Histidine box-2 element. Positions 162 and 163 each coordinate substrate. Residues 194–214 (ISVVLMCFVVPTLVPWYIWGE) traverse the membrane as a helical segment. Residue Ser-215 is a topological domain, lumenal. The chain crosses the membrane as a helical span at residues 216–238 (LWNSYFLASILRYTISLNISWLV). Trp-236 lines the substrate pocket. Residues 239–330 (NSAAHMYGNR…RKARTGDSSA (92 aa)) lie on the Cytoplasmic side of the membrane. The Fe cation site is built by His-243, His-272, His-275, and His-276. The short motif at 272-276 (HNYHH) is the Histidine box-3 element.

The protein belongs to the fatty acid desaturase type 1 family. As to quaternary structure, may self-associate and form homodimers. Requires Fe(2+) as cofactor. As to expression, detected in fetal brain, and at lower levels in fetal kidney. Detected in adult brain and pancreas, and at lower levels in kidney and lung. Expressed in spiral ganglion cells and the organ of Corti of fetal cochlea.

The protein localises to the endoplasmic reticulum membrane. It catalyses the reaction octadecanoyl-CoA + 2 Fe(II)-[cytochrome b5] + O2 + 2 H(+) = (9Z)-octadecenoyl-CoA + 2 Fe(III)-[cytochrome b5] + 2 H2O. The enzyme catalyses hexadecanoyl-CoA + 2 Fe(II)-[cytochrome b5] + O2 + 2 H(+) = (9Z)-hexadecenoyl-CoA + 2 Fe(III)-[cytochrome b5] + 2 H2O. Its function is as follows. Stearoyl-CoA desaturase that utilizes O(2) and electrons from reduced cytochrome b5 to introduce the first double bond into saturated fatty acyl-CoA substrates. Catalyzes the insertion of a cis double bond at the delta-9 position into fatty acyl-CoA substrates including palmitoyl-CoA and stearoyl-CoA. Gives rise to a mixture of 16:1 and 18:1 unsaturated fatty acids. Involved in neuronal cell proliferation and differentiation through down-regulation of EGFR/AKT/MAPK and Wnt signaling pathways. The polypeptide is Stearoyl-CoA desaturase 5 (SCD5) (Homo sapiens (Human)).